The following is a 358-amino-acid chain: Cyclin-dependent kinase 10 (358 aa).

A Protein kinase domain is found at 37–321 (FEKLNRIGEG…AGDCLESSYF (285 aa)). Residues 43–51 (IGEGTYGIV) and lysine 66 contribute to the ATP site. Aspartate 161 acts as the Proton acceptor in catalysis. Phosphothreonine is present on threonine 194. The tract at residues 332–358 (LMPTFPHHRNKRAAPAATEGQSKRCRP) is disordered.

This sequence belongs to the protein kinase superfamily. CMGC Ser/Thr protein kinase family. CDC2/CDKX subfamily. In terms of assembly, heterodimer with CCNQ, the interaction is required for kinase activity. Interacts with ETS2. Interacts with PRK2.

It localises to the cytoplasm. The protein resides in the cytoskeleton. It is found in the cilium basal body. It carries out the reaction L-seryl-[protein] + ATP = O-phospho-L-seryl-[protein] + ADP + H(+). It catalyses the reaction L-threonyl-[protein] + ATP = O-phospho-L-threonyl-[protein] + ADP + H(+). Its function is as follows. Cyclin-dependent kinase that phosphorylates the transcription factor ETS2 (in vitro) and positively controls its proteasomal degradation (in cells). Involved in the regulation of actin cytoskeleton organization through the phosphorylation of actin dynamics regulators such as PKN2. Is a negative regulator of ciliogenesis through phosphorylation of PKN2 and promotion of RhoA signaling. The chain is Cyclin-dependent kinase 10 (Cdk10) from Rattus norvegicus (Rat).